The following is a 1201-amino-acid chain: Potassium channel subfamily T member 1 (1201 aa).

The disordered stretch occupies residues 1-28 (MARAKLKNSPSESNSHVKTVPPATTEDV). Residues 1–92 (MARAKLKNSP…FFIKNQRSSL (92 aa)) are Cytoplasmic-facing. Polar residues predominate over residues 8 to 17 (NSPSESNSHV). The helical transmembrane segment at 93–115 (RIRLFNFSLKLLTCLLYIVRVLL) threads the bilayer. The Extracellular portion of the chain corresponds to 116-152 (DNPEEGIGCWECEKQNYTLFNQSTKINWSHIFWVDRK). N-linked (GlcNAc...) asparagine glycans are attached at residues N131 and N136. The helical transmembrane segment at 153-175 (LPLWAVQVSIALISFLETMLLIY) threads the bilayer. Residues 176 to 184 (LSYKGNIWE) are Cytoplasmic-facing. The chain crosses the membrane as a helical span at residues 185 to 206 (QIFRISFILEMINTVPFIITIF). At 207–216 (WPPLRNLFIP) the chain is on the extracellular side. The chain crosses the membrane as a helical span at residues 217–229 (VFLNCWLAKYALE). The Cytoplasmic segment spans residues 230 to 249 (NMINDLHRAIQRTQSAMFNQ). Residues 250–272 (VLILICTLLCLVFTGTCGIQHLE) form a helical membrane-spanning segment. At 273-279 (RAGEKLS) the chain is on the extracellular side. The segment at residues 280–300 (LFKSFYFCIVTFSTVGYGDVT) is an intramembrane region (pore-forming). K(+)-binding residues include V294 and G295. Topologically, residues 301–304 (PKIW) are extracellular. A helical transmembrane segment spans residues 305–326 (PSQLLVVIMICVALVVLPLQFE). Topologically, residues 327–1201 (ELVYLWMERQ…NPETRDETQL (875 aa)) are cytoplasmic. One can recognise an RCK N-terminal 1 domain in the interval 350–486 (EKHVVLCVSS…FHVKFADHVV (137 aa)). Residues L511, H514, S536, and N538 each coordinate Na(+). Residues C750 and C751 each contribute to the Zn(2+) site. Positions 753 and 756 each coordinate K(+). R753 and K756 together coordinate Na(+). The Zn(2+) site is built by C758 and H760. K(+) is bound by residues N761, Y769, and G770. Position 771 (F771) interacts with Na(+). The RCK N-terminal 2 domain occupies 773-913 (NKLIIVSAET…QFRAKDSYSL (141 aa)). K(+)-binding residues include S779, L810, D812, G834, and D857. Residues 1175–1201 (NDGHSRKSSCSNKLGPCNPETRDETQL) form a disordered region.

This sequence belongs to the potassium channel family. Calcium-activated (TC 1.A.1.3) subfamily. KCa4.1/KCNT1 sub-subfamily. As to quaternary structure, homotetramer; which constitutes the Na(+)-activated K(+) channel. Interacts with KCNT2; these heterodimer channels differ from the homomers in their unitary conductance, kinetic behavior, subcellular localization, and response to activation of protein kinase C. Phosphorylated by protein kinase C. Phosphorylation of the C-terminal domain increases channel activity.

It is found in the cell membrane. It carries out the reaction K(+)(in) = K(+)(out). Activated by high intracellular Na(+). In addition to activation by Na(+), is cooperatively activated by intracellular Cl(-) levels. Inhibited by Zn(2+). Activated upon stimulation of G-protein coupled receptors, such as CHRM1 and GRIA1. Its function is as follows. Sodium-activated K(+) channel. Acts as an important mediator of neuronal membrane excitability. Contributes to the delayed outward currents. Regulates of neuronal bursting in sensory neurons. Contributes to synaptic development and plasticity. This chain is Potassium channel subfamily T member 1 (KCNT1), found in Gallus gallus (Chicken).